Here is a 683-residue protein sequence, read N- to C-terminus: Multidrug resistance protein MdtO (683 aa).

9 helical membrane-spanning segments follow: residues 43–63 (VILISMTFEIPFVALSLAVLF), 75–95 (FVAILFVVATVLEIGSLFLIY), 100–120 (GEPLIRLIIAGPILMGCMFLM), 125–145 (LGLVFFAVAIVAIYGQTFPAM), 158–178 (WCIVVGLYPTLLMTLIGVLWF), 402–422 (FGGAFCGAILALLFTLLVMPW), 426–446 (IVELLFVLAPIFLLGAWIATS), 457–477 (MVVTFALATLENVFGPVYDLV), and 483–503 (ALGIIIGTVVSAVIYTFVWPE).

It belongs to the MdtO family. In terms of assembly, could be part of a tripartite efflux system composed of MdtN, MdtO and MdtP.

It localises to the cell inner membrane. Functionally, could be involved in resistance to puromycin, acriflavine and tetraphenylarsonium chloride. This Escherichia coli (strain K12) protein is Multidrug resistance protein MdtO (mdtO).